We begin with the raw amino-acid sequence, 247 residues long: Cell division protein ZapD (247 aa).

Belongs to the ZapD family. In terms of assembly, interacts with FtsZ.

The protein localises to the cytoplasm. Functionally, cell division factor that enhances FtsZ-ring assembly. Directly interacts with FtsZ and promotes bundling of FtsZ protofilaments, with a reduction in FtsZ GTPase activity. The protein is Cell division protein ZapD of Citrobacter koseri (strain ATCC BAA-895 / CDC 4225-83 / SGSC4696).